Consider the following 334-residue polypeptide: B3 domain-containing protein LOC_Os12g40090 (334 aa).

Positions 5–102 form a DNA-binding region, TF-B3 1; sequence RIRFFRLMTG…SFDVLIFDAS (98 aa). Residues 142–178 form a disordered region; sequence TSTPSVLIGSPHKASTSKKLSGKTKTNPRKEPEDPNC. A compositionally biased stretch (low complexity) spans 154 to 166; it reads KASTSKKLSGKTK. The segment at residues 227-326 is a DNA-binding region (TF-B3 2); that stretch reads FVVVLQTAHV…TMTVHVIGKA (100 aa).

The protein localises to the nucleus. This Oryza sativa subsp. japonica (Rice) protein is B3 domain-containing protein LOC_Os12g40090.